A 662-amino-acid polypeptide reads, in one-letter code: Transketolase (662 aa).

His28 is a substrate binding site. Residues His68 and 115-117 each bind thiamine diphosphate; that span reads GPL. Asp156 is a binding site for Mg(2+). The thiamine diphosphate site is built by Gly157 and Asn186. Asn186 and Ile188 together coordinate Mg(2+). His261, Arg356, and Ser383 together coordinate substrate. Position 261 (His261) interacts with thiamine diphosphate. The Proton donor role is filled by Glu410. Thiamine diphosphate is bound at residue Phe436. Positions 460, 468, and 519 each coordinate substrate.

This sequence belongs to the transketolase family. As to quaternary structure, homodimer. Mg(2+) is required as a cofactor. Ca(2+) serves as cofactor. It depends on Mn(2+) as a cofactor. The cofactor is Co(2+). Requires thiamine diphosphate as cofactor.

The catalysed reaction is D-sedoheptulose 7-phosphate + D-glyceraldehyde 3-phosphate = aldehydo-D-ribose 5-phosphate + D-xylulose 5-phosphate. Its pathway is carbohydrate biosynthesis; Calvin cycle. It participates in carbohydrate degradation; pentose phosphate pathway. Catalyzes the transfer of a two-carbon ketol group from a ketose donor to an aldose acceptor, via a covalent intermediate with the cofactor thiamine pyrophosphate. This chain is Transketolase (tkt), found in Staphylococcus epidermidis (strain ATCC 35984 / DSM 28319 / BCRC 17069 / CCUG 31568 / BM 3577 / RP62A).